Reading from the N-terminus, the 1738-residue chain is MLKRKQSSRVEAQPVTDFGPDESLSDNADILWINKPWVHSLLRICAIISVIPVCMNTPMTFEHYPPLQYVTFTLDTLLMFLYTAEMIAKMHIRGIVKGDSSYVKDRWCVFDGFMVFCLWVSLVLQVFEIADIVDQMSPWGMLRIPRPLIMIRAFRIYFRFELPRTRITNILKRSGEQIWSVSIFLLFFLLLYGILGVQMFGTFTYHCVVNDTKPGNVTWNSLAIPDTHCSPELEEGYQCPPGFKCMDLEDLGLSRQELGYSGFNEIGTSIFTVYEASSQEGWVFLMYRAIDSFPRWRSYFYFITLIFFLAWLVKNVFIAVIIETFAEIRVQFQQMWGTRSSTTSTATTQMFHEDAAGGWQLVAVDVNKPQGRAPACLQKMMRSSVFHMFILSMVTVDVIVAASNYYKGENFRRQYDEFYLAEVAFTVLFDLEALLKIWCLGFTGYISSSLHKFELLLVIGTTLHVYPDLYHSQFTYFQVLRVVRLIKISPALEDFVYKIFGPGKKLGSLVVFTASLLIVMSAISLQMFCFVEELDRFTTFPRAFMSMFQILTQEGWVDVMDQTLNAVGHMWAPLVAIYFILYHLFATLILLSLFVAVILDNLELDEDLKKLKQLKQSEANADTKEKLPLRLRIFEKFPNRPQMVKISKLPSDFTVPKIRESFMKQFIDRQQQDTCCLFRILPSTSSSSCDNPKRPTVEDNKYIDQKLRKSVFSIRARNLLEKETAVTKILRACTRQRMLSGSFEGQPTKERSILSVQHHIRQERRSLRHGSNSQRISRGKSLETLTQDHSNTVRYRNAQREDSEIKMIQEKKEQAEMKRKVQEEELRENHPYFDKPLFIVGREHRFRNFCRVVVRARFNASKTDPVTGAVKNTKYHQLYDLLGLVTYLDWVMITVTICSCISMMFESPFRRVMHAPTLQIAEYVFVIFMSIELNLKIMADGLFFTPTAVIRDFGGVMDIFIYLVSLIFLCWMPQNVPAESGAQLLMVLRCLRPLRIFKLVPQMRKVVRELFSGFKEIFLVSILLLTLMLVFASFGVQLFAGKLAKCNDPNIIRREDCNGIFRINVSVSKNLNLKLRPGEKKPGFWVPRVWANPRNFNFDNVGNAMLALFEVLSLKGWVEVRDVIIHRVGPIHGIYIHVFVFLGCMIGLTLFVGVVIANFNENKGTALLTVDQRRWEDLKSRLKIAQPLHLPPRPDNDGFRAKMYDITQHPFFKRTIALLVLAQSVLLSVKWDVEDPVTVPLATMSVVFTFIFVLEVTMKIIAMSPAGFWQSRRNRYDLLVTSLGVVWVVLHFALLNAYTYMMGACVIVFRFFSICGKHVTLKMLLLTVVVSMYKSFFIIVGMFLLLLCYAFAGVVLFGTVKYGENINRHANFSSAGKAITVLFRIVTGEDWNKIMHDCMVQPPFCTPDEFTYWATDCGNYAGALMYFCSFYVIIAYIMLNLLVAIIVENFSLFYSTEEDQLLSYNDLRHFQIIWNMVDDKREGVIPTFRVKFLLRLLRGRLEVDLDKDKLLFKHMCYEMERLHNGGDVTFHDVLSMLSYRSVDIRKSLQLEELLAREQLEYTIEEEVAKQTIRMWLKKCLKRIRAKQQQSCSIIHSLRESQQQELSRFLNPPSIETTQPSEDTNANSQDHNTQPESSSQQQLLSPTLSDRGGSRQDAADTGKPQRKIGQWRLPSAPKPISHSVSSVNLRFGGRTTMKSVVCKMNPMPDTASCGSEVKKWWTRQLTVESDESGDDLLDI.

Over 1 to 36 (MLKRKQSSRVEAQPVTDFGPDESLSDNADILWINKP) the chain is Cytoplasmic. The helical transmembrane segment at 37-57 (WVHSLLRICAIISVIPVCMNT) threads the bilayer. Over 58 to 65 (PMTFEHYP) the chain is Extracellular. A helical transmembrane segment spans residues 66–90 (PLQYVTFTLDTLLMFLYTAEMIAKM). Over 91–106 (HIRGIVKGDSSYVKDR) the chain is Cytoplasmic. A helical membrane pass occupies residues 107–129 (WCVFDGFMVFCLWVSLVLQVFEI). Over 130–137 (ADIVDQMS) the chain is Extracellular. Residues 138–158 (PWGMLRIPRPLIMIRAFRIYF) form a helical; Voltage-sensor membrane-spanning segment. Residues 159–173 (RFELPRTRITNILKR) are Cytoplasmic-facing. The chain crosses the membrane as a helical span at residues 174 to 199 (SGEQIWSVSIFLLFFLLLYGILGVQM). The Extracellular portion of the chain corresponds to 200–269 (FGTFTYHCVV…YSGFNEIGTS (70 aa)). 2 disulfide bridges follow: cysteine 207–cysteine 239 and cysteine 229–cysteine 245. 2 N-linked (GlcNAc...) asparagine glycosylation sites follow: asparagine 210 and asparagine 216. Positions 270–289 (IFTVYEASSQEGWVFLMYRA) form an intramembrane region, pore-forming. At 290-294 (IDSFP) the chain is on the extracellular side. A helical transmembrane segment spans residues 295 to 322 (RWRSYFYFITLIFFLAWLVKNVFIAVII). The Cytoplasmic segment spans residues 323–382 (ETFAEIRVQFQQMWGTRSSTTSTATTQMFHEDAAGGWQLVAVDVNKPQGRAPACLQKMMR). The helical transmembrane segment at 383–403 (SSVFHMFILSMVTVDVIVAAS) threads the bilayer. Residues 404 to 416 (NYYKGENFRRQYD) lie on the Extracellular side of the membrane. A helical transmembrane segment spans residues 417–439 (EFYLAEVAFTVLFDLEALLKIWC). Topologically, residues 440–447 (LGFTGYIS) are cytoplasmic. A helical membrane pass occupies residues 448-468 (SSLHKFELLLVIGTTLHVYPD). Residues 469-472 (LYHS) lie on the Extracellular side of the membrane. Residues 473–492 (QFTYFQVLRVVRLIKISPAL) traverse the membrane as a helical; Voltage-sensor segment. Residues 493 to 502 (EDFVYKIFGP) are Cytoplasmic-facing. Residues 503 to 530 (GKKLGSLVVFTASLLIVMSAISLQMFCF) form a helical membrane-spanning segment. Residues 531–543 (VEELDRFTTFPRA) are Extracellular-facing. Residues 544–563 (FMSMFQILTQEGWVDVMDQT) constitute an intramembrane region (pore-forming). The Extracellular portion of the chain corresponds to 564–569 (LNAVGH). The chain crosses the membrane as a helical span at residues 570–599 (MWAPLVAIYFILYHLFATLILLSLFVAVIL). Residues 600 to 886 (DNLELDEDLK…QLYDLLGLVT (287 aa)) are Cytoplasmic-facing. The segment at 762-789 (QERRSLRHGSNSQRISRGKSLETLTQDH) is disordered. A coiled-coil region spans residues 795–830 (YRNAQREDSEIKMIQEKKEQAEMKRKVQEEELRENH). A helical membrane pass occupies residues 887-906 (YLDWVMITVTICSCISMMFE). Topologically, residues 907-915 (SPFRRVMHA) are extracellular. Residues 916–939 (PTLQIAEYVFVIFMSIELNLKIMA) traverse the membrane as a helical segment. Over 940 to 947 (DGLFFTPT) the chain is Cytoplasmic. A helical transmembrane segment spans residues 948 to 972 (AVIRDFGGVMDIFIYLVSLIFLCWM). At 973–980 (PQNVPAES) the chain is on the extracellular side. Residues 981–1003 (GAQLLMVLRCLRPLRIFKLVPQM) traverse the membrane as a helical; Voltage-sensor segment. Over 1004 to 1015 (RKVVRELFSGFK) the chain is Cytoplasmic. The chain crosses the membrane as a helical span at residues 1016–1039 (EIFLVSILLLTLMLVFASFGVQLF). The Extracellular segment spans residues 1040–1104 (AGKLAKCNDP…NFNFDNVGNA (65 aa)). Cysteines 1046 and 1057 form a disulfide. An N-linked (GlcNAc...) asparagine glycan is attached at asparagine 1064. Residues 1105-1124 (MLALFEVLSLKGWVEVRDVI) constitute an intramembrane region (pore-forming). The Extracellular segment spans residues 1125 to 1129 (IHRVG). A helical membrane pass occupies residues 1130 to 1159 (PIHGIYIHVFVFLGCMIGLTLFVGVVIANF). Residues 1160 to 1210 (NENKGTALLTVDQRRWEDLKSRLKIAQPLHLPPRPDNDGFRAKMYDITQHP) lie on the Cytoplasmic side of the membrane. Residues 1211-1227 (FFKRTIALLVLAQSVLL) traverse the membrane as a helical segment. Over 1228–1236 (SVKWDVEDP) the chain is Extracellular. The helical transmembrane segment at 1237–1260 (VTVPLATMSVVFTFIFVLEVTMKI) threads the bilayer. The Cytoplasmic segment spans residues 1261 to 1271 (IAMSPAGFWQS). A helical transmembrane segment spans residues 1272 to 1293 (RRNRYDLLVTSLGVVWVVLHFA). The Extracellular segment spans residues 1294–1296 (LLN). Residues 1297–1318 (AYTYMMGACVIVFRFFSICGKH) form a helical; Voltage-sensor membrane-spanning segment. Over 1319–1331 (VTLKMLLLTVVVS) the chain is Cytoplasmic. A helical membrane pass occupies residues 1332-1357 (MYKSFFIIVGMFLLLLCYAFAGVVLF). Topologically, residues 1358 to 1378 (GTVKYGENINRHANFSSAGKA) are extracellular. An intramembrane region (pore-forming) is located at residues 1379–1398 (ITVLFRIVTGEDWNKIMHDC). Over 1399 to 1420 (MVQPPFCTPDEFTYWATDCGNY) the chain is Extracellular. Cysteine 1405 and cysteine 1417 are disulfide-bonded. The helical transmembrane segment at 1421–1447 (AGALMYFCSFYVIIAYIMLNLLVAIIV) threads the bilayer. Over 1448–1738 (ENFSLFYSTE…DESGDDLLDI (291 aa)) the chain is Cytoplasmic. Positions 1611-1679 (PPSIETTQPS…WRLPSAPKPI (69 aa)) are disordered. The segment covering 1613-1631 (SIETTQPSEDTNANSQDHN) has biased composition (polar residues). Over residues 1633-1648 (QPESSSQQQLLSPTLS) the composition is skewed to low complexity.

This sequence belongs to the NALCN family. Found in a complex with NALCN, UNC79, UNC80 and NACL1; these auxiliary subunits are indispensable for the function of NALCN channel. Interacts with UNC80; required for the NALCN activation/inhibition by GPCRs in neurons. Found in a complex with NALCN, UNC79 and UNC80; UNC80 bridges NALCN to UNC79. Interacts with CHRM3. Phosphorylated on tyrosine residues. Predominantly expressed in the brain, moderately in the heart and weakly in the pancreas.

The protein resides in the cell membrane. The enzyme catalyses Na(+)(in) = Na(+)(out). Its activity is regulated as follows. Inhibited by low micromolar concentrations of Gd(3+) and high micromolar concentrations of verapamil. Insensitive to tetrodotoxin (TTX) and potentiated by low external Ca(2+) concentration. Voltage-gated ion channel responsible for the resting Na(+) permeability that controls neuronal excitability. NALCN channel functions as a multi-protein complex, which consists at least of NALCN, NALF1, UNC79 and UNC80. NALCN is the voltage-sensing, pore-forming subunit of the NALCN channel complex. NALCN channel complex is constitutively active and conducts monovalent cations but is blocked by physiological concentrations of extracellular divalent cations. In addition to its role in regulating neuronal excitability, is required for normal respiratory rhythm, systemic osmoregulation by controlling the serum sodium concentration and in the regulation of the intestinal pace-making activity in the interstitial cells of Cajal. NALCN channel is also activated by neuropeptides such as neurotensin and substance P (SP) through a SRC family kinases-dependent pathway. In addition, NALCN activity is enhanced/modulated by several GPCRs, such as CHRM3. The chain is Sodium leak channel NALCN (Nalcn) from Rattus norvegicus (Rat).